The sequence spans 299 residues: MSLRVSMRAFSLSSRVCARSGSKFSFGDLSKVKLRAPIIPTHKNFDVSPDHPLWAFFPEGNNTETALRSGDELDMNSREWTFAELRRKSFEDLHKLWYLTLKERNILAREVRLAESLRYSRTQQHDALDEKLVTVQKRIKQVLLERQVAHERVQTFTQQQQQYLTEFEERYLNASEHEIVSFNEKLVRLQYAFFGIEPQLQDYDLEDINIKFVEGLSFVANLKVKRYLKQNPAQEQEFELPLNGVVEELPFLLRNVTEAIEEVKALRQSGESVKLDKIDVFPFLRSALSNAIEQEELDQ.

Belongs to the universal ribosomal protein uL29 family. Component of the mitochondrial large ribosomal subunit. Mature mitochondrial ribosomes consist of a small (37S) and a large (54S) subunit. The 37S subunit contains at least 33 different proteins and 1 molecule of RNA (15S). The 54S subunit contains at least 45 different proteins and 1 molecule of RNA (21S).

It is found in the mitochondrion. The protein is Large ribosomal subunit protein uL29m (MRPL4) of Scheffersomyces stipitis (strain ATCC 58785 / CBS 6054 / NBRC 10063 / NRRL Y-11545) (Yeast).